A 203-amino-acid polypeptide reads, in one-letter code: Small ribosomal subunit protein uS3 (203 aa).

The KH type-2 domain occupies 39 to 113 (IREIIRRNFL…NHVLNAKNIA (75 aa)).

Belongs to the universal ribosomal protein uS3 family. As to quaternary structure, part of the 30S ribosomal subunit. Forms a tight complex with proteins S10 and S14.

Functionally, binds the lower part of the 30S subunit head. Binds mRNA in the 70S ribosome, positioning it for translation. The protein is Small ribosomal subunit protein uS3 of Carsonella ruddii.